A 112-amino-acid polypeptide reads, in one-letter code: Integration host factor subunit alpha (112 aa).

The protein belongs to the bacterial histone-like protein family. In terms of assembly, heterodimer of an alpha and a beta chain.

Functionally, this protein is one of the two subunits of integration host factor, a specific DNA-binding protein that functions in genetic recombination as well as in transcriptional and translational control. This chain is Integration host factor subunit alpha, found in Rhizobium leguminosarum bv. trifolii (strain WSM2304).